Reading from the N-terminus, the 133-residue chain is Glycine cleavage system H protein (133 aa).

One can recognise a Lipoyl-binding domain in the interval 24–106 (IATIGISAYA…YGDGWLLKVR (83 aa)). At K65 the chain carries N6-lipoyllysine.

It belongs to the GcvH family. As to quaternary structure, the glycine cleavage system is composed of four proteins: P, T, L and H. The cofactor is (R)-lipoate.

In terms of biological role, the glycine cleavage system catalyzes the degradation of glycine. The H protein shuttles the methylamine group of glycine from the P protein to the T protein. The polypeptide is Glycine cleavage system H protein (Crocosphaera subtropica (strain ATCC 51142 / BH68) (Cyanothece sp. (strain ATCC 51142))).